The primary structure comprises 422 residues: Enolase (422 aa).

(2R)-2-phosphoglycerate is bound at residue Gln-161. The active-site Proton donor is Glu-203. Residues Asp-240, Glu-283, and Asp-310 each coordinate Mg(2+). The (2R)-2-phosphoglycerate site is built by Lys-335, Arg-364, Ser-365, and Lys-386. Lys-335 (proton acceptor) is an active-site residue.

Belongs to the enolase family. Requires Mg(2+) as cofactor.

The protein localises to the cytoplasm. The protein resides in the secreted. It is found in the cell surface. The enzyme catalyses (2R)-2-phosphoglycerate = phosphoenolpyruvate + H2O. It functions in the pathway carbohydrate degradation; glycolysis; pyruvate from D-glyceraldehyde 3-phosphate: step 4/5. Functionally, catalyzes the reversible conversion of 2-phosphoglycerate (2-PG) into phosphoenolpyruvate (PEP). It is essential for the degradation of carbohydrates via glycolysis. This chain is Enolase, found in Deinococcus deserti (strain DSM 17065 / CIP 109153 / LMG 22923 / VCD115).